Consider the following 246-residue polypeptide: CTD nuclear envelope phosphatase 1 homolog (246 aa).

The helical transmembrane segment at threonine 3–phenylalanine 23 threads the bilayer. The region spanning leucine 53–leucine 220 is the FCP1 homology domain.

The protein belongs to the dullard family.

It localises to the membrane. It is found in the nucleus envelope. It catalyses the reaction O-phospho-L-seryl-[protein] + H2O = L-seryl-[protein] + phosphate. The enzyme catalyses O-phospho-L-threonyl-[protein] + H2O = L-threonyl-[protein] + phosphate. Its function is as follows. Serine/threonine protein phosphatase that may dephosphorylate and activate lipin-like phosphatases. Lipins are phosphatidate phosphatases that catalyze the conversion of phosphatidic acid to diacylglycerol and control the metabolism of fatty acids at different levels. May indirectly modulate the lipid composition of nuclear and/or endoplasmic reticulum membranes and be required for proper nuclear membrane morphology and/or dynamics. Contributes to closure of nuclear envelope (NE) holes and prevents excess nuclear membranes after meiosis and mitosis, possibly through spatial regulation of lipin. May limit the production of endoplasmic reticulum (ER) sheets proximal to the NE to prevent the ER membranes that feed into NE openings from invading the nuclear interior and thereby restrict nuclear transport to nuclear pore complexes (NPCs). May also indirectly regulate the production of lipid droplets and triacylglycerol. This is CTD nuclear envelope phosphatase 1 homolog (cnep-1) from Caenorhabditis elegans.